A 376-amino-acid chain; its full sequence is Ribonucleoside-diphosphate reductase subunit beta (376 aa).

3 residues coordinate Fe cation: Asp85, Glu116, and His119. The active site involves Tyr123. Fe cation-binding residues include Glu205, Glu239, and His242.

It belongs to the ribonucleoside diphosphate reductase small chain family. As to quaternary structure, tetramer of two alpha and two beta subunits. Requires Fe cation as cofactor.

It catalyses the reaction a 2'-deoxyribonucleoside 5'-diphosphate + [thioredoxin]-disulfide + H2O = a ribonucleoside 5'-diphosphate + [thioredoxin]-dithiol. Functionally, provides the precursors necessary for DNA synthesis. Catalyzes the biosynthesis of deoxyribonucleotides from the corresponding ribonucleotides. The polypeptide is Ribonucleoside-diphosphate reductase subunit beta (nrdB) (Buchnera aphidicola subsp. Schizaphis graminum (strain Sg)).